The chain runs to 388 residues: Nitric oxide reductase FlRd-NAD(+) reductase (388 aa).

It belongs to the FAD-dependent oxidoreductase family. Requires FAD as cofactor.

The protein localises to the cytoplasm. It carries out the reaction 2 reduced [nitric oxide reductase rubredoxin domain] + NAD(+) + H(+) = 2 oxidized [nitric oxide reductase rubredoxin domain] + NADH. The protein operates within nitrogen metabolism; nitric oxide reduction. One of at least two accessory proteins for anaerobic nitric oxide (NO) reductase. Reduces the rubredoxin moiety of NO reductase. This Aeromonas salmonicida (strain A449) protein is Nitric oxide reductase FlRd-NAD(+) reductase.